The following is a 404-amino-acid chain: Argininosuccinate synthase (404 aa).

ATP-binding positions include 12-20 and A40; that span reads AYSGGLDTS. Positions 92 and 97 each coordinate L-citrulline. Position 122 (G122) interacts with ATP. L-aspartate is bound by residues T124, N128, and D129. L-citrulline is bound at residue N128. Residues R132, S181, S190, E266, and Y278 each contribute to the L-citrulline site.

The protein belongs to the argininosuccinate synthase family. Type 1 subfamily. As to quaternary structure, homotetramer.

Its subcellular location is the cytoplasm. The catalysed reaction is L-citrulline + L-aspartate + ATP = 2-(N(omega)-L-arginino)succinate + AMP + diphosphate + H(+). The protein operates within amino-acid biosynthesis; L-arginine biosynthesis; L-arginine from L-ornithine and carbamoyl phosphate: step 2/3. The chain is Argininosuccinate synthase from Erwinia tasmaniensis (strain DSM 17950 / CFBP 7177 / CIP 109463 / NCPPB 4357 / Et1/99).